Here is a 294-residue protein sequence, read N- to C-terminus: Indole-3-glycerol phosphate synthase (294 aa).

It belongs to the TrpC family.

It catalyses the reaction 1-(2-carboxyphenylamino)-1-deoxy-D-ribulose 5-phosphate + H(+) = (1S,2R)-1-C-(indol-3-yl)glycerol 3-phosphate + CO2 + H2O. It participates in amino-acid biosynthesis; L-tryptophan biosynthesis; L-tryptophan from chorismate: step 4/5. The polypeptide is Indole-3-glycerol phosphate synthase (Parasynechococcus marenigrum (strain WH8102)).